Reading from the N-terminus, the 262-residue chain is Hydroxyethylthiazole kinase (262 aa).

Methionine 50 provides a ligand contact to substrate. Residues arginine 125 and threonine 171 each contribute to the ATP site. Glycine 198 is a binding site for substrate.

Belongs to the Thz kinase family. Mg(2+) is required as a cofactor.

It carries out the reaction 5-(2-hydroxyethyl)-4-methylthiazole + ATP = 4-methyl-5-(2-phosphooxyethyl)-thiazole + ADP + H(+). The protein operates within cofactor biosynthesis; thiamine diphosphate biosynthesis; 4-methyl-5-(2-phosphoethyl)-thiazole from 5-(2-hydroxyethyl)-4-methylthiazole: step 1/1. Its function is as follows. Catalyzes the phosphorylation of the hydroxyl group of 4-methyl-5-beta-hydroxyethylthiazole (THZ). This is Hydroxyethylthiazole kinase from Escherichia fergusonii (strain ATCC 35469 / DSM 13698 / CCUG 18766 / IAM 14443 / JCM 21226 / LMG 7866 / NBRC 102419 / NCTC 12128 / CDC 0568-73).